A 373-amino-acid polypeptide reads, in one-letter code: Histidinol-phosphate aminotransferase (373 aa).

Lys233 is modified (N6-(pyridoxal phosphate)lysine).

This sequence belongs to the class-II pyridoxal-phosphate-dependent aminotransferase family. Histidinol-phosphate aminotransferase subfamily. As to quaternary structure, homodimer. The cofactor is pyridoxal 5'-phosphate.

The enzyme catalyses L-histidinol phosphate + 2-oxoglutarate = 3-(imidazol-4-yl)-2-oxopropyl phosphate + L-glutamate. The protein operates within amino-acid biosynthesis; L-histidine biosynthesis; L-histidine from 5-phospho-alpha-D-ribose 1-diphosphate: step 7/9. This Nitratidesulfovibrio vulgaris (strain DP4) (Desulfovibrio vulgaris) protein is Histidinol-phosphate aminotransferase.